Consider the following 693-residue polypeptide: Sodium-dependent phosphate transport protein 2B (693 aa).

Residues 1–46 are disordered; it reads MAPWPELENSQPTSEKYTVKADGEQSAKPEKAKETEKDDTGTPITK. Topologically, residues 1–89 are cytoplasmic; it reads MAPWPELENS…KWSERDTKGK (89 aa). Over residues 17 to 40 the composition is skewed to basic and acidic residues; it reads YTVKADGEQSAKPEKAKETEKDDT. The helical transmembrane segment at 90–110 threads the bilayer; it reads ILCVFQGIGKFILLLVFLYFF. Residues 111–135 lie on the Extracellular side of the membrane; it reads VCSLDVLSSAFQLVGGKVAGKFFNN. Residues 136 to 156 form a helical membrane-spanning segment; sequence NSIMSNPLAGMVIGVLVTVLV. The Cytoplasmic portion of the chain corresponds to 157–212; the sequence is QSSSTSTSIVVSMVASSLLPVHAAIPIIMGANIGTSITNTIVALMQAGDRKEFRRA. Residues 213 to 233 traverse the membrane as a helical segment; that stretch reads FAGATVHDFFNWLSVLVLLPL. Topologically, residues 234–361 are extracellular; that stretch reads EAATGYLERL…IFVNFNLSDA (128 aa). Cys302 and Cys349 are joined by a disulfide. Asn307 and Asn320 each carry an N-linked (GlcNAc...) asparagine glycan. Residues 362 to 382 traverse the membrane as a helical segment; sequence IVGTILLITSLLILCTCLILI. Over 383 to 408 the chain is Cytoplasmic; it reads VKLLGSVLRGQVAAVIKKTINTDFPY. Residues 409–429 form a helical membrane-spanning segment; the sequence is PFSWVTGYLAILVGAGMTFIV. The Extracellular segment spans residues 430-485; it reads QSSSVFTSAMTPLIGIGVISIQRAYPLTLGANIGTTTTAILAALASPGSTLKSSLQ. Residues 486-506 traverse the membrane as a helical segment; the sequence is IALCHFFFNISGIILWYPIPF. The Cytoplasmic portion of the chain corresponds to 507–525; the sequence is TRLPIRLAKGLGNISSKYR. The chain crosses the membrane as a helical span at residues 526–546; sequence WFAIVYLIVFFLLIPLAVFGL. Residues 547 to 550 are Extracellular-facing; sequence SLIG. Residues 551–571 form a helical membrane-spanning segment; sequence WPVLVGVASPIVLVILLVVVL. Topologically, residues 572–693 are cytoplasmic; that stretch reads KILQSFCPGS…TKIVSSVTAL (122 aa).

This sequence belongs to the SLC34A transporter family. In terms of processing, glycosylated.

The protein resides in the apical cell membrane. The enzyme catalyses 3 Na(+)(out) + phosphate(out) = 3 Na(+)(in) + phosphate(in). Involved in actively transporting phosphate into cells via Na(+) cotransport. This Bos taurus (Bovine) protein is Sodium-dependent phosphate transport protein 2B (SLC34A2).